Here is a 108-residue protein sequence, read N- to C-terminus: Urease subunit beta (108 aa).

This sequence belongs to the urease beta subunit family. As to quaternary structure, heterotrimer of UreA (gamma), UreB (beta) and UreC (alpha) subunits. Three heterotrimers associate to form the active enzyme.

Its subcellular location is the cytoplasm. It carries out the reaction urea + 2 H2O + H(+) = hydrogencarbonate + 2 NH4(+). It participates in nitrogen metabolism; urea degradation; CO(2) and NH(3) from urea (urease route): step 1/1. The polypeptide is Urease subunit beta (Trichormus variabilis (strain ATCC 29413 / PCC 7937) (Anabaena variabilis)).